The chain runs to 350 residues: Membrane progestin receptor alpha (350 aa).

At M1–H80 the chain is on the cytoplasmic side. The helical transmembrane segment at L81–W101 threads the bilayer. Topologically, residues G102–H105 are extracellular. The chain crosses the membrane as a helical span at residues A106–A126. Residues H127–S139 are Cytoplasmic-facing. Residues F140 to F160 form a helical membrane-spanning segment. At Y161 to E165 the chain is on the extracellular side. A helical transmembrane segment spans residues P166–L186. Over S187–A239 the chain is Cytoplasmic. The chain crosses the membrane as a helical span at residues L240–F260. Over M261–Q278 the chain is Extracellular. A helical transmembrane segment spans residues L279–Y299. Over E300 to S318 the chain is Cytoplasmic. The chain crosses the membrane as a helical span at residues G319 to V339. The Extracellular segment spans residues R340 to Q350.

Belongs to the ADIPOR family.

The protein localises to the cell membrane. In terms of biological role, plasma membrane progesterone (P4) receptor coupled to G proteins. Seems to act through a G(i) mediated pathway. May be involved in oocyte maturation. Involved in neurosteroid inhibition of apoptosis. Also binds dehydroepiandrosterone (DHEA), pregnanolone, pregnenolone and allopregnanolone. This is Membrane progestin receptor alpha (PAQR7) from Sus scrofa (Pig).